The following is a 405-amino-acid chain: uncharacterized protein (405 aa).

Transmembrane regions (helical) follow at residues 19–39 (IVSIVMFNFASYLTIGLPLAV), 47–67 (VMGFSAFWAGLVISLQYFATL), 85–105 (IVVFGLCGCFLSGLGYLTAGL), 107–127 (ASLPVISLLLLCLGRVILGIG), 156–176 (GIVTYGAMAMGAPLGVVFYHW), 178–198 (GLQALALIIMGVALVAILLAI), 224–244 (GMALALASAGFGVIATFITLF), 252–272 (GAAFALTLFSCAFVGTRLLFP), 283–303 (VAMICFSVEIIGLLLVGVATM), 309–329 (IGVLLAGAGFSLVFPALGVVA), 344–364 (TYTVFMDLSLGVTGPLAGLVM), and 366–386 (WAGVPVIYLAAAGLVAIALLL).

The protein belongs to the major facilitator superfamily. YhhS family.

It is found in the cell inner membrane. This is an uncharacterized protein from Escherichia coli O6:H1 (strain CFT073 / ATCC 700928 / UPEC).